The sequence spans 507 residues: Cytochrome P450 monooxygenase ptmU (507 aa).

The helical transmembrane segment at 4–24 threads the bilayer; that stretch reads VNAWWVGGSLLLGIWAIVVFF. 3 N-linked (GlcNAc...) asparagine glycosylation sites follow: Asn98, Asn202, and Asn398. Residue Cys444 participates in heme binding.

Belongs to the cytochrome P450 family. The cofactor is heme.

The protein resides in the membrane. It functions in the pathway secondary metabolite biosynthesis. Cytochrome P450 monooxygenase; part of the gene cluster that mediates the biosynthesis of the indole diterpenes penitrems. The geranylgeranyl diphosphate (GGPP) synthase ptmG catalyzes the first step in penitrem biosynthesis via conversion of farnesyl pyrophosphate and isopentyl pyrophosphate into geranylgeranyl pyrophosphate (GGPP). Condensation of indole-3-glycerol phosphate with GGPP by the prenyl transferase ptmC then forms 3-geranylgeranylindole (3-GGI). Epoxidation by the FAD-dependent monooxygenase ptmM leads to a epoxidized-GGI that is substrate of the terpene cyclase ptmB for cyclization to yield paspaline. Paspaline is subsequently converted to 13-desoxypaxilline by the cytochrome P450 monooxygenase ptmP, the latter being then converted to paxilline by the cytochrome P450 monooxygenase ptmQ. Paxilline is converted to beta-paxitriol via C-10 ketoreduction by the short-chain dehydrogenase ptmH which can be monoprenylated at the C-20 by the indole diterpene prenyltransferase ptmD. A two-step elimination (acetylation and elimination) process performed by the O-acetyltransferase ptmV and ptmI leads to the production of the prenylated form of penijanthine. The FAD-linked oxidoreductase ptmO then converts the prenylated form of penijanthine into PC-M5 which is in turn transformed into PC-M4 by the aromatic dimethylallyltransferase ptmE. Five sequential oxidative transformations performed by the cytochrome P450 monooxygenases ptmK, ptmU, ptmL, ptmN and ptmJ yield the various penitrem compounds. PtmK, ptmU and ptmM are involved in the formation of the key bicyclic ring of penitrem C via the formation of the intermediates secopenitrem D and penitrem D. PtmL catalyzes the epoxidation of penitrem D and C to yield penitrem B and F, respectively. PtmJ catalyzes the last benzylic hydroxylation to convert penitrem B to prenitrem E and penitrem F to penitrem A. This Penicillium ochrochloron protein is Cytochrome P450 monooxygenase ptmU.